Here is a 165-residue protein sequence, read N- to C-terminus: Fimbrial protein (165 aa).

Positions Met1–Ala21 are cleaved as a signal peptide.

Its subcellular location is the fimbrium. Functionally, structural subunit of the sef14 fimbriae. This Salmonella enteritidis protein is Fimbrial protein (sefA).